An 873-amino-acid chain; its full sequence is Mitogen-activated protein kinase kinase kinase kinase 3 (873 aa).

Met1 carries the N-acetylmethionine modification. A Protein kinase domain is found at 16–273 (FELIQRIGSG…AEKLLQHPFV (258 aa)). ATP-binding positions include 22–30 (IGSGTYGDV) and Lys45. The Proton acceptor role is filled by Asp136. 2 positions are modified to phosphoserine: Ser329 and Ser377. Positions 389-518 (AHLEDDEGDD…KPISNGLPPT (130 aa)) are disordered. Positions 452-466 (HVPPRPPPPRLPPQK) are enriched in pro residues. Positions 487–499 (VHQQQSEQRGTNL) are enriched in polar residues. One can recognise a CNH domain in the interval 535–846 (PLKIHCATSW…IFRLLGSDRV (312 aa)).

The protein belongs to the protein kinase superfamily. STE Ser/Thr protein kinase family. STE20 subfamily. As to quaternary structure, interacts with SH3GL2. Interaction appears to regulate MAP4K3-mediated JNK activation. Mg(2+) serves as cofactor.

The enzyme catalyses L-seryl-[protein] + ATP = O-phospho-L-seryl-[protein] + ADP + H(+). It carries out the reaction L-threonyl-[protein] + ATP = O-phospho-L-threonyl-[protein] + ADP + H(+). Its function is as follows. Serine/threonine kinase that plays a role in the response to environmental stress. Appears to act upstream of the JUN N-terminal pathway. Activator of the Hippo signaling pathway which plays a pivotal role in organ size control and tumor suppression by restricting proliferation and promoting apoptosis. MAP4Ks act in parallel to and are partially redundant with STK3/MST2 and STK4/MST2 in the phosphorylation and activation of LATS1/2, and establish MAP4Ks as components of the expanded Hippo pathway. This Rattus norvegicus (Rat) protein is Mitogen-activated protein kinase kinase kinase kinase 3 (Map4k3).